The primary structure comprises 356 residues: Molybdenum import ATP-binding protein ModC (356 aa).

Residues M1–D232 enclose the ABC transporter domain. G33–T40 provides a ligand contact to ATP. One can recognise a Mop domain in the interval E291–E356.

It belongs to the ABC transporter superfamily. Molybdate importer (TC 3.A.1.8) family. As to quaternary structure, the complex is composed of two ATP-binding proteins (ModC), two transmembrane proteins (ModB) and a solute-binding protein (ModA).

The protein localises to the cell inner membrane. The enzyme catalyses molybdate(out) + ATP + H2O = molybdate(in) + ADP + phosphate + H(+). In terms of biological role, part of the ABC transporter complex ModABC involved in molybdenum import. Responsible for energy coupling to the transport system. In Methylococcus capsulatus (strain ATCC 33009 / NCIMB 11132 / Bath), this protein is Molybdenum import ATP-binding protein ModC.